A 105-amino-acid polypeptide reads, in one-letter code: Biogenesis of lysosome-related organelles complex 1 subunit SNN1 (105 aa).

Residues 70–105 adopt a coiled-coil conformation; sequence WKDDNERLDSLRKRVDSLKSRFQSLKLRSDKLEQRE.

The protein belongs to the SNAPIN family. As to quaternary structure, component of the biogenesis of lysosome-related organelles complex-1 (BLOC-1).

It localises to the endosome. In terms of biological role, component of the biogenesis of lysosome-related organelles complex-1 (BLOC-1), a complex involved in endosomal cargo sorting. The sequence is that of Biogenesis of lysosome-related organelles complex 1 subunit SNN1 (SNN1) from Zygosaccharomyces rouxii (strain ATCC 2623 / CBS 732 / NBRC 1130 / NCYC 568 / NRRL Y-229).